The sequence spans 170 residues: MKKPIEFYLSGDRVYSTREKAINQLYNNRGYGELKGDKLFLSLIEAAYLTEKGWIKVVDKDKELKFDDLMKLGKSRDEDFDIKYIVYKDLRDRGYIVKSALKFGSHYRVYRKDAEHSDWLIWVLRENQRLSPNDITARARVAHGVRKNMVLAIVDEDGDVVYYKVEWIKF.

Catalysis depends on residues Y110, H116, and K147.

This sequence belongs to the tRNA-intron endonuclease family. Archaeal short subfamily. Homotetramer; although the tetramer contains four active sites, only two participate in the cleavage. Therefore, it should be considered as a dimer of dimers.

It carries out the reaction pretRNA = a 3'-half-tRNA molecule with a 5'-OH end + a 5'-half-tRNA molecule with a 2',3'-cyclic phosphate end + an intron with a 2',3'-cyclic phosphate and a 5'-hydroxyl terminus.. In terms of biological role, endonuclease that removes tRNA introns. Cleaves pre-tRNA at the 5'- and 3'-splice sites to release the intron. The products are an intron and two tRNA half-molecules bearing 2',3' cyclic phosphate and 5'-OH termini. Recognizes a pseudosymmetric substrate in which 2 bulged loops of 3 bases are separated by a stem of 4 bp. The chain is tRNA-splicing endonuclease from Pyrococcus horikoshii (strain ATCC 700860 / DSM 12428 / JCM 9974 / NBRC 100139 / OT-3).